A 310-amino-acid chain; its full sequence is tRNA-dihydrouridine(16) synthase (310 aa).

FMN-binding positions include 7–9 and glutamine 68; that span reads PMQ. Catalysis depends on cysteine 98, which acts as the Proton donor. FMN-binding positions include lysine 139, 200 to 202, and 224 to 225; these read NGE and GR.

The protein belongs to the Dus family. DusC subfamily. Requires FMN as cofactor.

The catalysed reaction is 5,6-dihydrouridine(16) in tRNA + NADP(+) = uridine(16) in tRNA + NADPH + H(+). It catalyses the reaction 5,6-dihydrouridine(16) in tRNA + NAD(+) = uridine(16) in tRNA + NADH + H(+). Functionally, catalyzes the synthesis of 5,6-dihydrouridine (D), a modified base found in the D-loop of most tRNAs, via the reduction of the C5-C6 double bond in target uridines. Specifically modifies U16 in tRNAs. This Haemophilus influenzae (strain ATCC 51907 / DSM 11121 / KW20 / Rd) protein is tRNA-dihydrouridine(16) synthase.